A 1175-amino-acid chain; its full sequence is Tyrosine-protein phosphatase non-receptor type 21 (1175 aa).

The FERM domain maps to 23-308; it reads LVARIQLLNN…ARHKFYRLNQ (286 aa). The span at 395 to 421 shows a compositional bias: polar residues; that stretch reads YSAHSTNSLNTPQPYLQPSPMSSNPSI. The interval 395–445 is disordered; sequence YSAHSTNSLNTPQPYLQPSPMSSNPSIPGSDVMRPDYIPSHRHSALIPPSY. S577, S589, S590, S637, S673, S710, S711, S798, S800, and S805 each carry phosphoserine. A disordered region spans residues 663–702; that stretch reads DVAPRTFSAGSQSSVFSDKVKQEGTEEQGSGGYSHKKSLS. The region spanning 897–1168 is the Tyrosine-protein phosphatase domain; it reads VFTEYERILK…TFVYRVLIQF (272 aa). Residues E1068, 1109 to 1115, and Q1153 contribute to the substrate site; that span reads CSAGVGR. Catalysis depends on C1109, which acts as the Phosphocysteine intermediate.

Belongs to the protein-tyrosine phosphatase family. Non-receptor class subfamily. As to expression, particularly abundantly in adrenal glands.

The protein resides in the cytoplasm. The protein localises to the cytoskeleton. It carries out the reaction O-phospho-L-tyrosyl-[protein] + H2O = L-tyrosyl-[protein] + phosphate. The protein is Tyrosine-protein phosphatase non-receptor type 21 (Ptpn21) of Rattus norvegicus (Rat).